The following is a 334-amino-acid chain: Replication factor C subunit 4 (334 aa).

ATP is bound at residue 55-62; that stretch reads GPPGTGKT.

The protein belongs to the activator 1 small subunits family. In terms of assembly, heteropentamer of various rfc subunits that forms a complex (RFC) with PCNA in the presence of ATP.

It localises to the nucleus. The elongation of primed DNA templates by DNA polymerase delta and epsilon requires the action of the accessory proteins PCNA and activator 1. This subunit may be involved in the elongation of the multiprimed DNA template. The polypeptide is Replication factor C subunit 4 (rfc-4) (Caenorhabditis elegans).